Reading from the N-terminus, the 221-residue chain is Ras-related protein Rab-27A (221 aa).

At serine 2 the chain carries N-acetylserine. Position 2 is a phosphoserine (serine 2). Position 16 to 24 (16 to 24 (GDSGVGKTS)) interacts with GTP. The Effector region signature appears at 38 to 46 (FITTVGIDF). GTP-binding positions include 74–78 (DTAGQ), 133–136 (NKSD), and 163–165 (SAA). A disulfide bridge connects residues cysteine 123 and cysteine 188. S-geranylgeranyl cysteine attachment occurs at residues cysteine 219 and cysteine 221. The residue at position 221 (cysteine 221) is a Cysteine methyl ester.

Belongs to the small GTPase superfamily. Rab family. As to quaternary structure, binds SYTL1, SLAC2B, MYRIP, SYTL3, SYTL4 and SYTL5. Interacts with RPH3A and RPH3A. Binds MLPH and SYTL2. Interacts with UNC13D. Does not interact with the BLOC-3 complex (heterodimer of HPS1 and HPS4). Interacts (GDP-bound form preferentially) with DENND10.

It localises to the membrane. Its subcellular location is the melanosome. It is found in the late endosome. The protein localises to the lysosome. It catalyses the reaction GTP + H2O = GDP + phosphate + H(+). With respect to regulation, regulated by guanine nucleotide exchange factors (GEFs) which promote the exchange of bound GDP for free GTP, GTPase activating proteins (GAPs) which increase the GTP hydrolysis activity, and GDP dissociation inhibitors which inhibit the dissociation of the nucleotide from the GTPase. Activated by GEFs such as DENND10. Small GTPase which cycles between active GTP-bound and inactive GDP-bound states. In its active state, binds to a variety of effector proteins to regulate homeostasis of late endocytic pathway, including endosomal positioning, maturation and secretion. Plays a role in cytotoxic granule exocytosis in lymphocytes. Required for both granule maturation and granule docking and priming at the immunologic synapse. This chain is Ras-related protein Rab-27A (RAB27A), found in Canis lupus familiaris (Dog).